Here is a 133-residue protein sequence, read N- to C-terminus: Profilin (133 aa).

It belongs to the profilin family.

Functionally, more likely to influence phosphoinositide metabolism than actin assembly. This Vaccinia virus (strain Tian Tan) (VACV) protein is Profilin.